Reading from the N-terminus, the 142-residue chain is Midkine (142 aa).

An N-terminal signal peptide occupies residues 1–21; it reads MQPRGLLLLLALLLLAAAAEA. Intrachain disulfides connect Cys36–Cys60, Cys44–Cys69, Cys51–Cys73, Cys83–Cys115, and Cys93–Cys125.

Belongs to the pleiotrophin family.

It is found in the cell surface. The protein localises to the secreted. It localises to the extracellular space. Its subcellular location is the extracellular matrix. The protein resides in the basement membrane. Its function is as follows. Has mitogenic activity, and neurite extension activity for PC12 cells. This is Midkine (RIHB) from Gallus gallus (Chicken).